A 166-amino-acid chain; its full sequence is Cytochrome b (166 aa).

Transmembrane regions (helical) follow at residues 15 to 35, 77 to 97, 109 to 129, and 136 to 156; these read FKDI…VLIN, LGGV…PFYN, INQI…WIGA, and YVLL…INPL.

Belongs to the cytochrome b family. As to quaternary structure, the main subunits of complex b-c1 are: cytochrome b, cytochrome c1 and the Rieske protein. Heme is required as a cofactor.

It localises to the mitochondrion inner membrane. Its function is as follows. Component of the ubiquinol-cytochrome c reductase complex (complex III or cytochrome b-c1 complex) that is part of the mitochondrial respiratory chain. The b-c1 complex mediates electron transfer from ubiquinol to cytochrome c. Contributes to the generation of a proton gradient across the mitochondrial membrane that is then used for ATP synthesis. The chain is Cytochrome b (mt:Cyt-b) from Drosophila subobscura (Fruit fly).